Here is a 777-residue protein sequence, read N- to C-terminus: E3 UFM1-protein ligase 1 homolog (777 aa).

The span at 396 to 417 shows a compositional bias: basic and acidic residues; sequence MKHQDPMDRDSAVGEGKADKRE. The disordered stretch occupies residues 396–470; sequence MKHQDPMDRD…PSGGKKGGKD (75 aa).

This sequence belongs to the UFL1 family.

Functionally, E3 UFM1-protein ligase that mediates ufmylation of target proteins. In Aedes aegypti (Yellowfever mosquito), this protein is E3 UFM1-protein ligase 1 homolog.